Here is a 640-residue protein sequence, read N- to C-terminus: Threonine--tRNA ligase (640 aa).

The TGS domain occupies 1-61; sequence MPIIALPDGN…EKDSEVNIIT (61 aa). Positions 242–533 are catalytic; the sequence is DHRRIAKQMS…LIEHYAGRLP (292 aa). The Zn(2+) site is built by Cys333, His384, and His510.

This sequence belongs to the class-II aminoacyl-tRNA synthetase family. In terms of assembly, homodimer. Zn(2+) is required as a cofactor.

It localises to the cytoplasm. The catalysed reaction is tRNA(Thr) + L-threonine + ATP = L-threonyl-tRNA(Thr) + AMP + diphosphate + H(+). Its function is as follows. Catalyzes the attachment of threonine to tRNA(Thr) in a two-step reaction: L-threonine is first activated by ATP to form Thr-AMP and then transferred to the acceptor end of tRNA(Thr). Also edits incorrectly charged L-seryl-tRNA(Thr). The protein is Threonine--tRNA ligase of Prochlorococcus marinus (strain MIT 9313).